Consider the following 184-residue polypeptide: Peptide deformylase (184 aa).

Fe cation-binding residues include C92 and H134. The active site involves E135. H138 is a Fe cation binding site.

It belongs to the polypeptide deformylase family. The cofactor is Fe(2+).

It catalyses the reaction N-terminal N-formyl-L-methionyl-[peptide] + H2O = N-terminal L-methionyl-[peptide] + formate. Its function is as follows. Removes the formyl group from the N-terminal Met of newly synthesized proteins. Requires at least a dipeptide for an efficient rate of reaction. N-terminal L-methionine is a prerequisite for activity but the enzyme has broad specificity at other positions. This is Peptide deformylase from Psychrobacter arcticus (strain DSM 17307 / VKM B-2377 / 273-4).